A 359-amino-acid chain; its full sequence is Heat-inducible transcription repressor HrcA (359 aa).

This sequence belongs to the HrcA family.

In terms of biological role, negative regulator of class I heat shock genes (grpE-dnaK-dnaJ and groELS operons). Prevents heat-shock induction of these operons. This chain is Heat-inducible transcription repressor HrcA, found in Sinorhizobium fredii (strain NBRC 101917 / NGR234).